A 95-amino-acid polypeptide reads, in one-letter code: Glycophorin-C (95 aa).

Residues 1-25 (MSSPVRTPPPERLEPNPGMSYAVME) lie on the Extracellular side of the membrane. Residues 26–46 (IAIIAAVITAVALVLVCLLFL) form a helical; Signal-anchor for type III membrane protein membrane-spanning segment. Residues 47-95 (MLRYLYRHKGTYYTNEAKGTEFAESADAALQSDPALQDAGDTSKKEYFI) lie on the Cytoplasmic side of the membrane. S71, S78, and S89 each carry phosphoserine.

This sequence belongs to the glycophorin-C family.

The protein resides in the cell membrane. This is Glycophorin-C (Gypc) from Rattus norvegicus (Rat).